A 394-amino-acid chain; its full sequence is Mitogen-activated protein kinase homolog D5 (394 aa).

The Protein kinase domain occupies 62–347; that stretch reads RPPIMPIGKG…VENALAHPYL (286 aa). ATP-binding positions include 68–76 and lysine 91; that span reads IGKGAYGIV. Catalysis depends on aspartate 188, which acts as the Proton acceptor. Threonine 220 carries the post-translational modification Phosphothreonine. The short motif at 220 to 222 is the TXY element; it reads TEY. Tyrosine 222 bears the Phosphotyrosine mark.

Belongs to the protein kinase superfamily. CMGC Ser/Thr protein kinase family. MAP kinase subfamily. Mg(2+) serves as cofactor. In terms of processing, dually phosphorylated on Thr-220 and Tyr-222, which activates the enzyme. Leaves, roots, root apices, and dormant and growing axillary buds.

It carries out the reaction L-seryl-[protein] + ATP = O-phospho-L-seryl-[protein] + ADP + H(+). The catalysed reaction is L-threonyl-[protein] + ATP = O-phospho-L-threonyl-[protein] + ADP + H(+). Its activity is regulated as follows. Activated by tyrosine and threonine phosphorylation. The chain is Mitogen-activated protein kinase homolog D5 from Pisum sativum (Garden pea).